A 416-amino-acid chain; its full sequence is Gamma-glutamyl phosphate reductase (416 aa).

It belongs to the gamma-glutamyl phosphate reductase family.

The protein resides in the cytoplasm. The catalysed reaction is L-glutamate 5-semialdehyde + phosphate + NADP(+) = L-glutamyl 5-phosphate + NADPH + H(+). Its pathway is amino-acid biosynthesis; L-proline biosynthesis; L-glutamate 5-semialdehyde from L-glutamate: step 2/2. Catalyzes the NADPH-dependent reduction of L-glutamate 5-phosphate into L-glutamate 5-semialdehyde and phosphate. The product spontaneously undergoes cyclization to form 1-pyrroline-5-carboxylate. The sequence is that of Gamma-glutamyl phosphate reductase from Halalkalibacterium halodurans (strain ATCC BAA-125 / DSM 18197 / FERM 7344 / JCM 9153 / C-125) (Bacillus halodurans).